The following is a 464-amino-acid chain: ATP synthase subunit beta 1 (464 aa).

Residue Gly153–Thr160 coordinates ATP.

This sequence belongs to the ATPase alpha/beta chains family. As to quaternary structure, F-type ATPases have 2 components, CF(1) - the catalytic core - and CF(0) - the membrane proton channel. CF(1) has five subunits: alpha(3), beta(3), gamma(1), delta(1), epsilon(1). CF(0) has three main subunits: a(1), b(2) and c(9-12). The alpha and beta chains form an alternating ring which encloses part of the gamma chain. CF(1) is attached to CF(0) by a central stalk formed by the gamma and epsilon chains, while a peripheral stalk is formed by the delta and b chains.

It is found in the cell inner membrane. It carries out the reaction ATP + H2O + 4 H(+)(in) = ADP + phosphate + 5 H(+)(out). In terms of biological role, produces ATP from ADP in the presence of a proton gradient across the membrane. The catalytic sites are hosted primarily by the beta subunits. The polypeptide is ATP synthase subunit beta 1 (Burkholderia mallei (strain SAVP1)).